A 500-amino-acid polypeptide reads, in one-letter code: Glucose-6-phosphate isomerase (500 aa).

Glutamate 332 functions as the Proton donor in the catalytic mechanism. Active-site residues include histidine 363 and lysine 473.

The protein belongs to the GPI family.

The protein localises to the cytoplasm. It catalyses the reaction alpha-D-glucose 6-phosphate = beta-D-fructose 6-phosphate. The protein operates within carbohydrate biosynthesis; gluconeogenesis. It functions in the pathway carbohydrate degradation; glycolysis; D-glyceraldehyde 3-phosphate and glycerone phosphate from D-glucose: step 2/4. Functionally, catalyzes the reversible isomerization of glucose-6-phosphate to fructose-6-phosphate. The sequence is that of Glucose-6-phosphate isomerase from Rhizorhabdus wittichii (strain DSM 6014 / CCUG 31198 / JCM 15750 / NBRC 105917 / EY 4224 / RW1) (Sphingomonas wittichii).